A 280-amino-acid polypeptide reads, in one-letter code: uncharacterized protein (280 aa).

Belongs to the eukaryotic-type primase small subunit family.

This is an uncharacterized protein from Archaeoglobus fulgidus (strain ATCC 49558 / DSM 4304 / JCM 9628 / NBRC 100126 / VC-16).